We begin with the raw amino-acid sequence, 217 residues long: tRNA (guanine-N(7)-)-methyltransferase (217 aa).

S-adenosyl-L-methionine contacts are provided by Glu-43, Asp-68, Asn-101, and Asn-123. Lys-127 contributes to the substrate binding site. The interval 129-134 (RHNKRR) is interaction with RNA. Substrate-binding positions include Asp-159 and 196-199 (TEYE).

Belongs to the class I-like SAM-binding methyltransferase superfamily. TrmB family.

The catalysed reaction is guanosine(46) in tRNA + S-adenosyl-L-methionine = N(7)-methylguanosine(46) in tRNA + S-adenosyl-L-homocysteine. The protein operates within tRNA modification; N(7)-methylguanine-tRNA biosynthesis. Its function is as follows. Catalyzes the formation of N(7)-methylguanine at position 46 (m7G46) in tRNA. This is tRNA (guanine-N(7)-)-methyltransferase from Clostridium botulinum (strain 657 / Type Ba4).